The sequence spans 414 residues: Particulate methane monooxygenase alpha subunit (414 aa).

Positions 1 to 32 (MKTIKDRIAKWSAIGLLSAVAATAFYAPSASA) are cleaved as a signal peptide. Positions 33, 48, 72, 137, and 139 each coordinate Cu cation. Residues 33–172 (HGEKSQAAFM…MSEFRNPVTT (140 aa)) form a cupredoxin domain used to construct soluble pmoB (spmoB) region. A run of 2 helical transmembrane segments spans residues 186 to 206 (GNTYFWHAFWFAIGVAWIGYW) and 235 to 255 (VAMGFLAATILIVVMAMSSAN). The tract at residues 265 to 414 (QAGTMRGMKP…IDAPLIPSFM (150 aa)) is cupredoxin domain used to construct soluble pmoB (spmoB).

M.capsulatus has two forms of methane monooxygenase, a soluble (sMMO) and a membrane-bound (particulate) type (pMMO). The particulate type is a nonamer composed of three alpha:beta:gamma heterotrimeric protomers assembled into a cylindrical structure; the beta and gamma subunits comprise the bulk of the membrane-spanning regions and the soluble regions are derived primarily from alpha subunits which form two antiparallel beta-barrel-like structures each. This assembly, also called pMMO hydroxylase (pMMO-H), is proposed to associate with methanol dehydrogenase (MDH), also designated as pMMO-R, to form the pMMO-C complex which seems to have greater methane monooxygenase activity. The cofactor is Cu(2+).

The protein resides in the membrane. It carries out the reaction methane + a quinol + O2 = methanol + a quinone + H2O. In terms of biological role, methane monooxygenase is responsible for the initial oxygenation of methane to methanol in methanotrophs. At least in vitro, specific quinols can replace NADH as reductants. In Methylococcus capsulatus (strain ATCC 33009 / NCIMB 11132 / Bath), this protein is Particulate methane monooxygenase alpha subunit (pmoB1).